The chain runs to 429 residues: SET domain-containing protein 14 (429 aa).

Zn(2+) is bound by residues C26, C29, C39, C42, C48, C52, H60, and C64. The MYND-type zinc finger occupies 26 to 64 (CNQCLTSMAELKKCSACRRLAYCSQECQRADWKLHKVEC).

It localises to the nucleus. The chain is SET domain-containing protein 14 (set-14) from Caenorhabditis elegans.